The chain runs to 209 residues: Ribonuclease HII (209 aa).

An RNase H type-2 domain is found at 20–209 (QLEIGIDEVG…KSFLTKLNLI (190 aa)). A divalent metal cation-binding residues include Asp26, Glu27, and Asp122.

Belongs to the RNase HII family. Mn(2+) serves as cofactor. It depends on Mg(2+) as a cofactor.

Its subcellular location is the cytoplasm. It carries out the reaction Endonucleolytic cleavage to 5'-phosphomonoester.. In terms of biological role, endonuclease that specifically degrades the RNA of RNA-DNA hybrids. The polypeptide is Ribonuclease HII (Prochlorococcus marinus (strain MIT 9515)).